A 143-amino-acid chain; its full sequence is Crossover junction endodeoxyribonuclease Hjc (143 aa).

Glu11 provides a ligand contact to Mg(2+). The active site involves Ser31. Residues Asp41 and Glu54 each coordinate Mg(2+).

Belongs to the Holliday junction resolvase Hjc family. As to quaternary structure, homodimer. Mg(2+) is required as a cofactor.

The catalysed reaction is Endonucleolytic cleavage at a junction such as a reciprocal single-stranded crossover between two homologous DNA duplexes (Holliday junction).. Its function is as follows. A structure-specific endonuclease that resolves Holliday junction (HJ) intermediates during genetic recombination. Cleaves 4-way DNA junctions introducing paired nicks in opposing strands, leaving a 5'-terminal phosphate and a 3'-terminal hydroxyl group that are ligated to produce recombinant products. In terms of biological role, redundant function with Holliday junction resolvase Hje. The sequence is that of Crossover junction endodeoxyribonuclease Hjc from Sulfolobus acidocaldarius (strain ATCC 33909 / DSM 639 / JCM 8929 / NBRC 15157 / NCIMB 11770).